We begin with the raw amino-acid sequence, 349 residues long: tRNA pseudouridine synthase D (349 aa).

Position 27 (F27) interacts with substrate. The active-site Nucleophile is D80. N129 is a binding site for substrate. A TRUD domain is found at 155 to 303 (GVPNYFGAQR…VEAARRAMLL (149 aa)). Residue F329 participates in substrate binding.

It belongs to the pseudouridine synthase TruD family.

The catalysed reaction is uridine(13) in tRNA = pseudouridine(13) in tRNA. Responsible for synthesis of pseudouridine from uracil-13 in transfer RNAs. This is tRNA pseudouridine synthase D from Enterobacter sp. (strain 638).